Reading from the N-terminus, the 150-residue chain is Large ribosomal subunit protein bL9 (150 aa).

The protein belongs to the bacterial ribosomal protein bL9 family.

Functionally, binds to the 23S rRNA. This chain is Large ribosomal subunit protein bL9, found in Alcanivorax borkumensis (strain ATCC 700651 / DSM 11573 / NCIMB 13689 / SK2).